Here is a 128-residue protein sequence, read N- to C-terminus: Gastrotropin (128 aa).

Ala-2 is subject to N-acetylalanine.

This sequence belongs to the calycin superfamily. Fatty-acid binding protein (FABP) family.

The protein localises to the cytoplasm. It localises to the membrane. In terms of biological role, binds to bile acids and is involved in enterohepatic bile acid metabolism. Required for efficient apical to basolateral transport of conjugated bile acids in ileal enterocytes. Stimulates gastric acid and pepsinogen secretion. The protein is Gastrotropin (FABP6) of Bos taurus (Bovine).